The chain runs to 422 residues: Dihydroorotase (422 aa).

2 residues coordinate Zn(2+): His-61 and His-63. Residues 63 to 65 (HLR) and Asn-95 contribute to the substrate site. Asp-153 contributes to the Zn(2+) binding site. Asn-278 contacts substrate. Asp-305 is a Zn(2+) binding site. Residue Asp-305 is part of the active site. Residues His-309 and 322–323 (PG) contribute to the substrate site.

It belongs to the metallo-dependent hydrolases superfamily. DHOase family. Class I DHOase subfamily. In terms of assembly, monomer. Forms a 1:1 stoichiometric complex with PyrB. The complex exists as an equilibrium mixture of heterohexamers, composed of 3 PyrC and 3 PyrB subunits, and dodecamers. The complex has both DHOase and ATCase activities. Zn(2+) serves as cofactor.

It carries out the reaction (S)-dihydroorotate + H2O = N-carbamoyl-L-aspartate + H(+). Its pathway is pyrimidine metabolism; UMP biosynthesis via de novo pathway; (S)-dihydroorotate from bicarbonate: step 3/3. The monomer has very low activity by itself. Activated several thousandfold by formation of a complex with PyrB aspartate carbamoyltransferase (ATCase). Its function is as follows. Catalyzes the reversible cyclization of carbamoyl aspartate to dihydroorotate. The chain is Dihydroorotase from Aquifex aeolicus (strain VF5).